Consider the following 231-residue polypeptide: Two-component response regulator ARR3 (231 aa).

Residues 34–161 (HVLAVDDSLV…DVKRLRSYLT (128 aa)) enclose the Response regulatory domain. Residue Asp-94 is modified to 4-aspartylphosphate. The disordered stretch occupies residues 170–231 (GNKRKLTTPP…DSPMRSPGLA (62 aa)). The span at 185–199 (SATSSMESSDSTVES) shows a compositional bias: low complexity. Positions 210–221 (LTMSPESATSLV) are enriched in polar residues.

The protein belongs to the ARR family. Type-A subfamily. Two-component system major event consists of a His-to-Asp phosphorelay between a sensor histidine kinase (HK) and a response regulator (RR). In plants, the His-to-Asp phosphorelay involves an additional intermediate named Histidine-containing phosphotransfer protein (HPt). This multistep phosphorelay consists of a His-Asp-His-Asp sequential transfer of a phosphate group between first a His and an Asp of the HK protein, followed by the transfer to a conserved His of the HPt protein and finally the transfer to an Asp in the receiver domain of the RR protein. In terms of tissue distribution, predominantly expressed in roots.

It localises to the nucleus. Functionally, functions as a response regulator involved in His-to-Asp phosphorelay signal transduction system. Phosphorylation of the Asp residue in the receiver domain activates the ability of the protein to promote the transcription of target genes. Type-A response regulators seem to act as negative regulators of the cytokinin signaling. The chain is Two-component response regulator ARR3 (ARR3) from Arabidopsis thaliana (Mouse-ear cress).